A 303-amino-acid polypeptide reads, in one-letter code: Dipeptide transport system permease protein DppB (303 aa).

The next 7 membrane-spanning stretches (helical) occupy residues 9–29 (LGLLLLTLFLIVTLTFFMMQV), 62–82 (YFIYVGHMFTGNFGTSFIYTN), 93–113 (LPVSMQLGTQALILGTVLGAL), 129–149 (IFGFLSVLGISVPSFVIGTLI), 166–186 (GTFSQTIMPTIALSFAPMAVV), 227–247 (IPMLTLIGPMAAGLLTGSVLI), and 269–289 (FPVIMATTIVYAVILMVFILV). Residues 93-290 (LPVSMQLGTQ…VILMVFILVT (198 aa)) enclose the ABC transmembrane type-1 domain.

Belongs to the binding-protein-dependent transport system permease family. OppBC subfamily. In terms of assembly, the complex is composed of two ATP-binding proteins (DppD and DppF), two transmembrane proteins (DppB and DppC) and a solute-binding protein (DppA).

Its subcellular location is the cell membrane. Its function is as follows. Part of the ABC transporter DppABCDF involved in dipeptide transport. Responsible for the translocation of the substrate across the membrane. This Lactococcus lactis subsp. cremoris (strain MG1363) protein is Dipeptide transport system permease protein DppB.